The primary structure comprises 717 residues: UvrABC system protein C (717 aa).

Residues 16 to 95 form the GIY-YIG domain; that stretch reads DAPGVYRFHD…IKEYDPRFNV (80 aa). The region spanning 208-243 is the UVR domain; it reads DTLIRKLDREMRQASEELEFERAARLRDDLEALRRA. Disordered regions lie at residues 517 to 555 and 696 to 717; these read TAAGNGLADTAAGEPEADVAVTPQEAERTGIDPETGRPR and HAALAAGGGTGESRDNAEGESQ. Basic and acidic residues-rich tracts occupy residues 541-553 and 707-717; these read EAERTGIDPETGR and ESRDNAEGESQ.

The protein belongs to the UvrC family. In terms of assembly, interacts with UvrB in an incision complex.

The protein localises to the cytoplasm. The UvrABC repair system catalyzes the recognition and processing of DNA lesions. UvrC both incises the 5' and 3' sides of the lesion. The N-terminal half is responsible for the 3' incision and the C-terminal half is responsible for the 5' incision. The protein is UvrABC system protein C of Saccharopolyspora erythraea (strain ATCC 11635 / DSM 40517 / JCM 4748 / NBRC 13426 / NCIMB 8594 / NRRL 2338).